Reading from the N-terminus, the 315-residue chain is DNA-directed RNA polymerase subunit alpha (315 aa).

The segment at 1–228 (MLEIEKPIIE…EHFKLFMSLT (228 aa)) is alpha N-terminal domain (alpha-NTD). Residues 245 to 315 (KEKVLEMTVE…LGLALKLTEE (71 aa)) are alpha C-terminal domain (alpha-CTD).

This sequence belongs to the RNA polymerase alpha chain family. As to quaternary structure, homodimer. The RNAP catalytic core consists of 2 alpha, 1 beta, 1 beta' and 1 omega subunit. When a sigma factor is associated with the core the holoenzyme is formed, which can initiate transcription.

The catalysed reaction is RNA(n) + a ribonucleoside 5'-triphosphate = RNA(n+1) + diphosphate. Functionally, DNA-dependent RNA polymerase catalyzes the transcription of DNA into RNA using the four ribonucleoside triphosphates as substrates. This Clostridium beijerinckii (strain ATCC 51743 / NCIMB 8052) (Clostridium acetobutylicum) protein is DNA-directed RNA polymerase subunit alpha.